The primary structure comprises 350 residues: Ion-translocating oxidoreductase complex subunit D (350 aa).

Helical transmembrane passes span 20–40 (VMVLVILCLIPGVFLQSYFFG), 44–64 (LIQISLACLAALASEAFILKI), 68–88 (PVLNTLKDASALLTAILLAIS), 89–109 (IPPLAPWWIVVIGTIFAIIFV), and 125–145 (MAGYVLLLISFPVQMTSWLPV). At T187 the chain carries FMN phosphoryl threonine. Transmembrane regions (helical) follow at residues 215–235 (SWQQIYWINGAFLAGGLILLF), 241–261 (WHIPMSFLLGIGIFSFIAFAY), 267–287 (APPLFHLFSGATMLGAFFILS), 300–320 (ILYALLIAFIVVIIRNVGGYP), and 322–342 (AVAFAVLLGNMCVPLIDYYTQ).

Belongs to the NqrB/RnfD family. As to quaternary structure, the complex is composed of six subunits: RnfA, RnfB, RnfC, RnfD, RnfE and RnfG. FMN is required as a cofactor.

The protein localises to the cell inner membrane. Part of a membrane-bound complex that couples electron transfer with translocation of ions across the membrane. In Psychromonas ingrahamii (strain DSM 17664 / CCUG 51855 / 37), this protein is Ion-translocating oxidoreductase complex subunit D.